Consider the following 562-residue polypeptide: Arginine--tRNA ligase (562 aa).

Residues 121–131 (PNIAKPFSVGH) carry the 'HIGH' region motif.

The protein belongs to the class-I aminoacyl-tRNA synthetase family. Monomer.

It localises to the cytoplasm. The catalysed reaction is tRNA(Arg) + L-arginine + ATP = L-arginyl-tRNA(Arg) + AMP + diphosphate. This chain is Arginine--tRNA ligase, found in Streptococcus uberis (strain ATCC BAA-854 / 0140J).